We begin with the raw amino-acid sequence, 312 residues long: Ribonuclease Z (312 aa).

Positions 63, 65, 67, 68, 141, 212, and 270 each coordinate Zn(2+). D67 functions as the Proton acceptor in the catalytic mechanism.

Belongs to the RNase Z family. Homodimer. Zn(2+) serves as cofactor.

It catalyses the reaction Endonucleolytic cleavage of RNA, removing extra 3' nucleotides from tRNA precursor, generating 3' termini of tRNAs. A 3'-hydroxy group is left at the tRNA terminus and a 5'-phosphoryl group is left at the trailer molecule.. In terms of biological role, zinc phosphodiesterase, which displays some tRNA 3'-processing endonuclease activity. Probably involved in tRNA maturation, by removing a 3'-trailer from precursor tRNA. This is Ribonuclease Z from Lactobacillus helveticus (strain DPC 4571).